The following is a 609-amino-acid chain: Numb-like protein (609 aa).

Disordered stretches follow at residues 1–68, 223–283, 372–421, 434–464, and 537–609; these read MSRS…QWQA, GSFR…PVAA, ASAG…EEVS, QQQQ…QPFP, and AGAF…EIEL. The span at 19-29 shows a compositional bias: pro residues; that stretch reads PPAPCGAPGPP. A PID domain is found at 74 to 223; that stretch reads RKGTCSFPVR…ASRTSFAREG (150 aa). Serine 224 and serine 228 each carry phosphoserine. A compositionally biased stretch (basic and acidic residues) spans 233–245; sequence PAEREAPDKKKAE. The span at 246–259 shows a compositional bias: low complexity; the sequence is AAAAPTVAPGPAQP. The residue at position 263 (serine 263) is a Phosphoserine. A Phosphothreonine modification is found at threonine 279. The segment covering 409 to 418 has biased composition (basic and acidic residues); that stretch reads TPSEAERWLE. A Phosphoserine modification is found at serine 411. The segment covering 434 to 446 has biased composition (low complexity); it reads QQQQQQQQQQQQQ. Pro residues-rich tracts occupy residues 454 to 464 and 558 to 573; these read PTMPPALQPFP and NGAP…PAPE.

Interacts (via PTB domain) with MAP3K7IP2 (via C-terminal). Interacts (via C-terminal) with TRAF6 (via TRAF domains). Associates with EPS15 and NOTCH1.

The protein resides in the cytoplasm. Its function is as follows. Plays a role in the process of neurogenesis. Required throughout embryonic neurogenesis to maintain neural progenitor cells, also called radial glial cells (RGCs), by allowing their daughter cells to choose progenitor over neuronal cell fate. Not required for the proliferation of neural progenitor cells before the onset of embryonic neurogenesis. Also required postnatally in the subventricular zone (SVZ) neurogenesis by regulating SVZ neuroblasts survival and ependymal wall integrity. Negative regulator of NF-kappa-B signaling pathway. The inhibition of NF-kappa-B activation is mediated at least in part, by preventing MAP3K7IP2 to interact with polyubiquitin chains of TRAF6 and RIPK1 and by stimulating the 'Lys-48'-linked polyubiquitination and degradation of TRAF6 in cortical neurons. In Homo sapiens (Human), this protein is Numb-like protein (NUMBL).